Reading from the N-terminus, the 200-residue chain is MARYTGPTWKISRRLGISLSGTGKELQKRPYPPGQHGPGQRRKLSEYGLQLQEKQKLRHMYGVNERQFRKTFDEAGKMPGKHGENFMILLESRLDNLVYRLGLARTRRQARQLVTHGHILVDGSRVNIPSYRVKPGQTIAVREKSRNLQVIKEAIEVNNFVPDYLTFDPEKLEGTYTRLPERSELPAEINEALIVEFYSR.

Positions 21–42 (GTGKELQKRPYPPGQHGPGQRR) are disordered. The region spanning 92-155 (SRLDNLVYRL…RNLQVIKEAI (64 aa)) is the S4 RNA-binding domain.

The protein belongs to the universal ribosomal protein uS4 family. In terms of assembly, part of the 30S ribosomal subunit. Contacts protein S5. The interaction surface between S4 and S5 is involved in control of translational fidelity.

Functionally, one of the primary rRNA binding proteins, it binds directly to 16S rRNA where it nucleates assembly of the body of the 30S subunit. Its function is as follows. With S5 and S12 plays an important role in translational accuracy. This chain is Small ribosomal subunit protein uS4, found in Geobacillus thermodenitrificans (strain NG80-2).